A 693-amino-acid polypeptide reads, in one-letter code: Elongation factor G (693 aa).

The 275-residue stretch at 8–282 folds into the tr-type G domain; the sequence is EHTRNIGIMA…AVIDFMPSPT (275 aa). GTP is bound by residues 17–24, 81–85, and 135–138; these read AHIDAGKT, DTPGH, and NKMD.

Belongs to the TRAFAC class translation factor GTPase superfamily. Classic translation factor GTPase family. EF-G/EF-2 subfamily.

It is found in the cytoplasm. Catalyzes the GTP-dependent ribosomal translocation step during translation elongation. During this step, the ribosome changes from the pre-translocational (PRE) to the post-translocational (POST) state as the newly formed A-site-bound peptidyl-tRNA and P-site-bound deacylated tRNA move to the P and E sites, respectively. Catalyzes the coordinated movement of the two tRNA molecules, the mRNA and conformational changes in the ribosome. The protein is Elongation factor G of Ruminiclostridium cellulolyticum (strain ATCC 35319 / DSM 5812 / JCM 6584 / H10) (Clostridium cellulolyticum).